Here is a 195-residue protein sequence, read N- to C-terminus: Cysteine/O-acetylserine efflux protein (195 aa).

The Periplasmic segment spans residues 1–7 (MTPTLLS). Residues 8-28 (AFWTYTLITAMTPGPNNILAL) traverse the membrane as a helical segment. The Cytoplasmic segment spans residues 29–46 (SSATSHGFRQSTRVLAGM). The helical transmembrane segment at 47-67 (SLGFLIVMLLCAGISFSLAVI) threads the bilayer. Residues 68 to 69 (DP) lie on the Periplasmic side of the membrane. A helical transmembrane segment spans residues 70 to 90 (AAVHLLSWAGAAYIVWLAWKI). Over 91–104 (ATSPTKEDGLQTKP) the chain is Cytoplasmic. A helical transmembrane segment spans residues 105–125 (ISFWASFALQFVNVKIILYGV). Over 126-141 (TALSTFVLPQTQALSW) the chain is Periplasmic. Residues 142–162 (VVGVSVLLAMIGTFGNVCWAL) form a helical membrane-spanning segment. At 163-176 (AGHLFQRLFRQYGR) the chain is on the cytoplasmic side. Residues 177-194 (QLNIVLALLLVYCAVRIF) form a helical membrane-spanning segment. Y195 is a topological domain (periplasmic).

The protein belongs to the Rht family.

The protein localises to the cell inner membrane. The catalysed reaction is O-acetyl-L-serine(in) = O-acetyl-L-serine(out). It catalyses the reaction L-cysteine(in) = L-cysteine(out). Exporter of O-acetylserine (OAS) and cysteine. In Escherichia coli O1:K1 / APEC, this protein is Cysteine/O-acetylserine efflux protein (eamB).